A 276-amino-acid chain; its full sequence is Molybdenum storage protein subunit alpha (276 aa).

Octamer consisting of 4 alpha and 4 beta chains.

It is found in the cytoplasm. Its function is as follows. Intracellular storage of molybdenum. Binds polyoxomolybdates. Can bind at least 90 molybdenum atoms per protein molecule. The protein is Molybdenum storage protein subunit alpha of Azotobacter vinelandii (strain DJ / ATCC BAA-1303).